The following is a 488-amino-acid chain: Glutamyl-tRNA(Gln) amidotransferase subunit A (488 aa).

Active-site charge relay system residues include Lys-77 and Ser-152. Ser-176 (acyl-ester intermediate) is an active-site residue.

The protein belongs to the amidase family. GatA subfamily. As to quaternary structure, heterotrimer of A, B and C subunits.

It catalyses the reaction L-glutamyl-tRNA(Gln) + L-glutamine + ATP + H2O = L-glutaminyl-tRNA(Gln) + L-glutamate + ADP + phosphate + H(+). In terms of biological role, allows the formation of correctly charged Gln-tRNA(Gln) through the transamidation of misacylated Glu-tRNA(Gln) in organisms which lack glutaminyl-tRNA synthetase. The reaction takes place in the presence of glutamine and ATP through an activated gamma-phospho-Glu-tRNA(Gln). This Streptococcus mutans serotype c (strain ATCC 700610 / UA159) protein is Glutamyl-tRNA(Gln) amidotransferase subunit A.